Here is a 531-residue protein sequence, read N- to C-terminus: Probable inactive beta-glucosidase 25 (531 aa).

Residues M1–G24 form the signal peptide. Residues Q53 and N202–E203 each bind a beta-D-glucoside. The Proton donor role is filled by E203. C222 and C230 are oxidised to a cystine. A beta-D-glucoside is bound by residues F348 and E477–W478.

It belongs to the glycosyl hydrolase 1 family.

The chain is Probable inactive beta-glucosidase 25 from Arabidopsis thaliana (Mouse-ear cress).